The following is a 925-amino-acid chain: Translation initiation factor IF-2 (925 aa).

The disordered stretch occupies residues 190–329 (PAAPTSEAAP…RRRDEREAAV (140 aa)). Composition is skewed to pro residues over residues 199–209 (PPEPEPTPLPA), 217–238 (PVRP…PAPR), and 279–288 (RPVPAQPAPQ). The segment covering 289 to 307 (TPTRSGSGIAKKGAITKAG) has biased composition (low complexity). A compositionally biased stretch (basic and acidic residues) spans 320–329 (RRRDEREAAV). The tr-type G domain maps to 417-589 (VRPPVVTIMG…LLLVADYELE (173 aa)). Residues 426-433 (GHVDHGKT) are G1. GTP is bound at residue 426–433 (GHVDHGKT). Residues 451–455 (GITQH) are G2. Residues 476–479 (DTPG) form a G3 region. GTP is bound by residues 476–480 (DTPGH) and 530–533 (NKVD). The G4 stretch occupies residues 530-533 (NKVD). Residues 566–568 (SAK) form a G5 region.

The protein belongs to the TRAFAC class translation factor GTPase superfamily. Classic translation factor GTPase family. IF-2 subfamily.

The protein resides in the cytoplasm. One of the essential components for the initiation of protein synthesis. Protects formylmethionyl-tRNA from spontaneous hydrolysis and promotes its binding to the 30S ribosomal subunits. Also involved in the hydrolysis of GTP during the formation of the 70S ribosomal complex. The protein is Translation initiation factor IF-2 of Gloeobacter violaceus (strain ATCC 29082 / PCC 7421).